A 115-amino-acid polypeptide reads, in one-letter code: Large ribosomal subunit protein bL20 (115 aa).

Belongs to the bacterial ribosomal protein bL20 family.

Functionally, binds directly to 23S ribosomal RNA and is necessary for the in vitro assembly process of the 50S ribosomal subunit. It is not involved in the protein synthesizing functions of that subunit. The chain is Large ribosomal subunit protein bL20 from Borrelia hermsii (strain HS1 / DAH).